We begin with the raw amino-acid sequence, 162 residues long: Regulator of sigma D (162 aa).

The protein belongs to the Rsd/AlgQ family. As to quaternary structure, interacts with RpoD.

It is found in the cytoplasm. Functionally, binds RpoD and negatively regulates RpoD-mediated transcription activation by preventing the interaction between the primary sigma factor RpoD with the catalytic core of the RNA polymerase and with promoter DNA. May be involved in replacement of the RNA polymerase sigma subunit from RpoD to RpoS during the transition from exponential growth to the stationary phase. The sequence is that of Regulator of sigma D from Salmonella choleraesuis (strain SC-B67).